The sequence spans 547 residues: Chaperonin GroEL (547 aa).

ATP is bound by residues 30-33, K51, 87-91, G415, and D495; these read TLGP and DGTTT.

The protein belongs to the chaperonin (HSP60) family. In terms of assembly, forms a cylinder of 14 subunits composed of two heptameric rings stacked back-to-back. Interacts with the co-chaperonin GroES.

The protein resides in the cytoplasm. The catalysed reaction is ATP + H2O + a folded polypeptide = ADP + phosphate + an unfolded polypeptide.. Functionally, together with its co-chaperonin GroES, plays an essential role in assisting protein folding. The GroEL-GroES system forms a nano-cage that allows encapsulation of the non-native substrate proteins and provides a physical environment optimized to promote and accelerate protein folding. This Allorhizobium ampelinum (strain ATCC BAA-846 / DSM 112012 / S4) (Agrobacterium vitis (strain S4)) protein is Chaperonin GroEL.